Consider the following 546-residue polypeptide: Probable protein kinase UbiB (546 aa).

The Protein kinase domain maps to 124–502 (DFDIQPLASA…HVRQSQSRYL (379 aa)). Residues 130 to 138 (LASASIAQV) and Lys-153 each bind ATP. Catalysis depends on Asp-288, which acts as the Proton acceptor. Helical transmembrane passes span 501–521 (YLLG…VNRP) and 522–542 (EWGL…LVGW).

This sequence belongs to the ABC1 family. UbiB subfamily.

Its subcellular location is the cell inner membrane. It participates in cofactor biosynthesis; ubiquinone biosynthesis [regulation]. In terms of biological role, is probably a protein kinase regulator of UbiI activity which is involved in aerobic coenzyme Q (ubiquinone) biosynthesis. The polypeptide is Probable protein kinase UbiB (Salmonella gallinarum (strain 287/91 / NCTC 13346)).